An 892-amino-acid chain; its full sequence is Translation initiation factor IF-2 (892 aa).

Positions 65–296 are disordered; the sequence is KTRSTLNIPS…KGKRKPSTLQ (232 aa). Over residues 68–82 the composition is skewed to polar residues; that stretch reads STLNIPSTGGKSKSV. The segment covering 99-217 has biased composition (basic and acidic residues); it reads EQAKAEEQAQ…KMAAENEGKW (119 aa). Over residues 224 to 237 the composition is skewed to polar residues; the sequence is QTESADYHVTTSQH. The span at 239-254 shows a compositional bias: basic and acidic residues; sequence RAAEDENDAKVEGDRR. The segment covering 255–269 has biased composition (basic residues); the sequence is SRTRGGKATKQKKGN. The span at 270-283 shows a compositional bias: basic and acidic residues; the sequence is KLSESKADREEARA. Residues 391-560 enclose the tr-type G domain; the sequence is HRAPVVTIMG…LLQAEVLELK (170 aa). Residues 400–407 are G1; sequence GHVDHGKT. GTP is bound at residue 400 to 407; it reads GHVDHGKT. Residues 425–429 are G2; the sequence is GITQH. Residues 446–449 form a G3 region; it reads DTPG. GTP is bound by residues 446 to 450 and 500 to 503; these read DTPGH and NKID. A G4 region spans residues 500–503; it reads NKID. The G5 stretch occupies residues 536–538; the sequence is SAK.

This sequence belongs to the TRAFAC class translation factor GTPase superfamily. Classic translation factor GTPase family. IF-2 subfamily.

It localises to the cytoplasm. Its function is as follows. One of the essential components for the initiation of protein synthesis. Protects formylmethionyl-tRNA from spontaneous hydrolysis and promotes its binding to the 30S ribosomal subunits. Also involved in the hydrolysis of GTP during the formation of the 70S ribosomal complex. This chain is Translation initiation factor IF-2, found in Yersinia pseudotuberculosis serotype O:1b (strain IP 31758).